The following is a 169-amino-acid chain: MVSQRRDADAPKSILESLAGTRVLVVEARYYDDIADELLAGARAAIEAVGAEARIFTVPGALEIPSAIAILMEAGRKAGGPYDAAVALGCVIRGETGHYDIVAGESARALMDLSVSEHLPLGNGILTVETMEQALARARVSEMNKGGGAAEAALSLLAIKRAANLEPAR.

5-amino-6-(D-ribitylamino)uracil is bound by residues Tyr-30, 61-63 (ALE), and 90-92 (CVI). Residue 95–96 (ET) participates in (2S)-2-hydroxy-3-oxobutyl phosphate binding. His-98 (proton donor) is an active-site residue. 5-amino-6-(D-ribitylamino)uracil is bound at residue Asn-123. (2S)-2-hydroxy-3-oxobutyl phosphate is bound at residue Arg-137.

It belongs to the DMRL synthase family.

The enzyme catalyses (2S)-2-hydroxy-3-oxobutyl phosphate + 5-amino-6-(D-ribitylamino)uracil = 6,7-dimethyl-8-(1-D-ribityl)lumazine + phosphate + 2 H2O + H(+). The protein operates within cofactor biosynthesis; riboflavin biosynthesis; riboflavin from 2-hydroxy-3-oxobutyl phosphate and 5-amino-6-(D-ribitylamino)uracil: step 1/2. In terms of biological role, catalyzes the formation of 6,7-dimethyl-8-ribityllumazine by condensation of 5-amino-6-(D-ribitylamino)uracil with 3,4-dihydroxy-2-butanone 4-phosphate. This is the penultimate step in the biosynthesis of riboflavin. The protein is 6,7-dimethyl-8-ribityllumazine synthase of Methylorubrum populi (strain ATCC BAA-705 / NCIMB 13946 / BJ001) (Methylobacterium populi).